A 156-amino-acid polypeptide reads, in one-letter code: Aspercryptin biosynthesis cluster protein B (156 aa).

An N-terminal signal peptide occupies residues 1 to 39; the sequence is MRMANRIGAGRKSALQLSHLRTRLTSSAAAVATAPTLDP.

Belongs to the YciI family.

It participates in secondary metabolite biosynthesis. Its function is as follows. Part of the gene cluster that mediates the biosynthesis of aspercryptins, linear lipopeptides built from six amino acids including 2 highly unusual and nonproteogenic amino acids, 2-amino-octanoic acid (2aoa) and 2-amino-dodecanol (2adol). The core structure of aspercryptins is as follows: Ser/Ala-Thr-Ile/Val-2aoa-Aasn-2adol. The first step of aspercryptin biosynthesis is the generation of the fatty acid precursors, octanoic and dodecanoic acids, by the FAS subunits atnF and atnM. The fatty acid precursors are likely transformed into the corresponding alpha-amino fatty acids in three steps. First, they are hydroxylated by the cytochrome P450 monooxygenase atnE, then oxidized to the corresponding alpha-keto acids by the NAD(P)-dependent oxidoreductase atnD, and finally converted to the alpha-amino fatty acids by the PLP-dependent aminotransferases atnH or atnJ. the alpha-amino fatty acids, 2-amino-octanoic and 2-amino-dodecanoic acids, are recognized, activated, and covalently tethered to the NRPS atnA by its fourth and sixth adenylation domains. The second module of atnA is the Thr module and contains an epimerase (E) domain responsible for the epimerization of Thr to D-allo-Thr. Additionally, despite atnA having only one epimerase domain, the first amino acid of aspercryptin A1 is D-Ser, suggesting that serine is either loaded directly as D-Ser on the first module or that the epimerase domain in the threonine module epimerizes both L-Ser and L-Thr. After condensation of the hexapeptide of aspercryptin, the C-terminal reductase (TE) domain might be involved in the reductive release and production of the aldehyde hexapeptide. Further reduction would generate aspercryptins. The variety of aspercryptins produced reflects the flexibility of the atnA NRPS, allowing incorporation of alanine instead of serine, valine for isoleucine, and a C10 fatty amino alcohol instead of the C12 version. AtnB seems to be involved in the selectivity for Ile versus Val by the third module. Moreover, type B, C and D aspercryptins have an additional N-terminal cichorine, acetyl and propionyl group respectively. In Emericella nidulans (strain FGSC A4 / ATCC 38163 / CBS 112.46 / NRRL 194 / M139) (Aspergillus nidulans), this protein is Aspercryptin biosynthesis cluster protein B.